The following is a 176-amino-acid chain: Mediator of RNA polymerase II transcription subunit 11 (176 aa).

Positions 98–176 are disordered; that stretch reads SRVRELEETK…MGGDSSMSTN (79 aa). Basic and acidic residues predominate over residues 99-108; it reads RVRELEETKA. Residues 124-154 are compositionally biased toward low complexity; sequence HAAAQQQQQQQQQQQQQQQQMQQAAQQQQQQ.

Belongs to the Mediator complex subunit 11 family. Component of the Mediator complex, which may include CDK8, MED4, MED6, MED11, MED14, MED17, MED18, MED20, MED21, MED22, MED27, MED28, MED30 and MED31.

Its subcellular location is the nucleus. In terms of biological role, component of the Mediator complex, a coactivator involved in the regulated transcription of nearly all RNA polymerase II-dependent genes. Mediator functions as a bridge to convey information from gene-specific regulatory proteins to the basal RNA polymerase II transcription machinery. Mediator is recruited to promoters by direct interactions with regulatory proteins and serves as a scaffold for the assembly of a functional pre-initiation complex with RNA polymerase II and the general transcription factors. The protein is Mediator of RNA polymerase II transcription subunit 11 (MED11) of Drosophila melanogaster (Fruit fly).